The chain runs to 163 residues: MALTNAQILAVIDSWEETVGQFPVITHHVPLGGGLQGTLHCYEIPLAAPYGVGFAKNGPTRWQYKRTINQVVHRWGSHTVPFLLEPDNINGKTCTASHLCHNTRCHNPLHLCWESLDDNKGRNWCPGPNGGCVHAVVCLRQGPLYGPGATVAGPQQRGSHFVV.

Homodimer. Zn(2+) is required as a cofactor.

Its function is as follows. Mediates the homing of a group I intron in the ribosomal DNA. Makes a four-base staggered cut in its ribosomal DNA target sequence. The chain is Intron-encoded endonuclease I-PpoI from Physarum polycephalum (Slime mold).